A 127-amino-acid chain; its full sequence is Large ribosomal subunit protein bL12 (127 aa).

It belongs to the bacterial ribosomal protein bL12 family. As to quaternary structure, homodimer. Part of the ribosomal stalk of the 50S ribosomal subunit. Forms a multimeric L10(L12)X complex, where L10 forms an elongated spine to which 2 to 4 L12 dimers bind in a sequential fashion. Binds GTP-bound translation factors.

In terms of biological role, forms part of the ribosomal stalk which helps the ribosome interact with GTP-bound translation factors. Is thus essential for accurate translation. The protein is Large ribosomal subunit protein bL12 of Streptomyces griseus subsp. griseus (strain JCM 4626 / CBS 651.72 / NBRC 13350 / KCC S-0626 / ISP 5235).